Reading from the N-terminus, the 319-residue chain is MKTETPSVKIVAIAADEAGQRIDNFLRTQLKGVPKSMIYRILRKGEVRVNKKRIKPEYKLEAGDEVRIPPVRVAEREEEAVSPHLQKVAALADVILYEDDHILVLNKPSGTAVHGGSGLSFGVIEGLRALRPEARFLELVHRLDRDTSGVLLVAKKRSALRSLHEQLREKGMQKDYLALVRGQWQSHVKTVQAPLLKNILQSGERIVRVSQEGKPSETRFKVEERYAFATLVRCSPVTGRTHQIRVHTQYAGHPIAFDDRYGDREFDQQLTEAGTGLKRLFLHAAALKFTHPGTGEVMRIEAPMDNALKRCLQVLRNAK.

The region spanning 20–83 (QRIDNFLRTQ…AEREEEAVSP (64 aa)) is the S4 RNA-binding domain. Asp-144 is a catalytic residue.

This sequence belongs to the pseudouridine synthase RluA family.

It carries out the reaction uridine(955/2504/2580) in 23S rRNA = pseudouridine(955/2504/2580) in 23S rRNA. Functionally, responsible for synthesis of pseudouridine from uracil at positions 955, 2504 and 2580 in 23S ribosomal RNA. The polypeptide is Ribosomal large subunit pseudouridine synthase C (rluC) (Salmonella typhimurium (strain LT2 / SGSC1412 / ATCC 700720)).